A 376-amino-acid polypeptide reads, in one-letter code: Putative glutamate--cysteine ligase 2-1 (376 aa).

It belongs to the glutamate--cysteine ligase type 2 family. YbdK subfamily.

It catalyses the reaction L-cysteine + L-glutamate + ATP = gamma-L-glutamyl-L-cysteine + ADP + phosphate + H(+). Its function is as follows. ATP-dependent carboxylate-amine ligase which exhibits weak glutamate--cysteine ligase activity. The protein is Putative glutamate--cysteine ligase 2-1 of Mycobacterium sp. (strain JLS).